The following is a 38-amino-acid chain: uncharacterized protein (38 aa).

This is an uncharacterized protein from Acidianus two-tailed virus (ATV).